The chain runs to 179 residues: MKKKRRLFIRTGILLVLICALGYTIYNAVFAGKESISEGSDAPNFVLEDTNGKRIELSDLKGKGVFLNFWGTWCEPCKKEFPYMANQYKHFKSQGVEIVAVNVGESKIAVHNFMKSYGVNFPVVLDTDRQVLDAYDVSPLPTTFLINPEGKVVKVVTGTMTESMIHDYMNLIKPGETSG.

A helical; Signal-anchor for type II membrane protein membrane pass occupies residues 11–30 (TGILLVLICALGYTIYNAVF). A Thioredoxin domain is found at 36–174 (ISEGSDAPNF…IHDYMNLIKP (139 aa)). C74 and C77 are joined by a disulfide.

The protein belongs to the thioredoxin family. ResA subfamily.

The protein localises to the cell membrane. It participates in protein modification; cytochrome c assembly. In terms of biological role, thiol-disulfide oxidoreductase which is required in disulfide reduction during c-type cytochrome synthesis. May accept reducing equivalents from CcdA, leading to breakage of disulfide bonds in apocytochrome c; following this reduction heme can be covalently attached. Does not play a role in sporulation. This is Thiol-disulfide oxidoreductase ResA (resA) from Bacillus subtilis (strain 168).